A 417-amino-acid chain; its full sequence is C4-dicarboxylate transport protein (417 aa).

The next 8 membrane-spanning stretches (helical) occupy residues 4 to 26, 41 to 60, 72 to 94, 137 to 159, 180 to 202, 217 to 239, 285 to 307, and 347 to 369; these read IYVQ…PQIG, KLVI…ARMG, ALIY…GRLI, FIGA…TGFA, LFFG…AMGF, ALVA…GIAW, VVGL…YMTL, and FITL…AILV.

It belongs to the dicarboxylate/amino acid:cation symporter (DAACS) (TC 2.A.23) family.

The protein localises to the cell inner membrane. Functionally, responsible for the transport of dicarboxylates such as succinate, fumarate, and malate from the periplasm across the membrane. The polypeptide is C4-dicarboxylate transport protein (Caulobacter vibrioides (strain ATCC 19089 / CIP 103742 / CB 15) (Caulobacter crescentus)).